A 316-amino-acid polypeptide reads, in one-letter code: Transaldolase (316 aa).

Lysine 132 acts as the Schiff-base intermediate with substrate in catalysis.

This sequence belongs to the transaldolase family. Type 1 subfamily. In terms of assembly, homodimer.

The protein resides in the cytoplasm. It catalyses the reaction D-sedoheptulose 7-phosphate + D-glyceraldehyde 3-phosphate = D-erythrose 4-phosphate + beta-D-fructose 6-phosphate. It participates in carbohydrate degradation; pentose phosphate pathway; D-glyceraldehyde 3-phosphate and beta-D-fructose 6-phosphate from D-ribose 5-phosphate and D-xylulose 5-phosphate (non-oxidative stage): step 2/3. Functionally, transaldolase is important for the balance of metabolites in the pentose-phosphate pathway. The polypeptide is Transaldolase (Vibrio campbellii (strain ATCC BAA-1116)).